The chain runs to 394 residues: Benzoate membrane transport protein (394 aa).

The next 11 helical transmembrane spans lie at 16 to 36 (ATIA…IIFF), 49 to 69 (MISW…FLSI), 74 to 94 (PVVT…FPNI), 99 to 119 (AVAA…TGYF), 139 to 161 (LFQF…FSML), 176 to 196 (MLWV…MNPV), 220 to 240 (LALP…MAIL), 252 to 272 (IIAA…ITIV), 301 to 321 (GLFY…FSLL), 325 to 345 (LVAA…IKIA), and 368 to 388 (FLGL…YFIL).

It is found in the cell membrane. Probably involved in the transport of benzoate. The sequence is that of Benzoate membrane transport protein (benE) from Acinetobacter baylyi (strain ATCC 33305 / BD413 / ADP1).